The following is a 341-amino-acid chain: DNA-directed RNA polymerase subunit alpha (341 aa).

An alpha N-terminal domain (alpha-NTD) region spans residues 1 to 233 (MIRDEIPISA…NLFIPFLHAE (233 aa)). Positions 265–341 (TKGVTFKHIF…NLPKNKLHFH (77 aa)) are alpha C-terminal domain (alpha-CTD).

It belongs to the RNA polymerase alpha chain family. In terms of assembly, in plastids the minimal PEP RNA polymerase catalytic core is composed of four subunits: alpha, beta, beta', and beta''. When a (nuclear-encoded) sigma factor is associated with the core the holoenzyme is formed, which can initiate transcription.

The protein localises to the plastid. The protein resides in the chloroplast. The enzyme catalyses RNA(n) + a ribonucleoside 5'-triphosphate = RNA(n+1) + diphosphate. Functionally, DNA-dependent RNA polymerase catalyzes the transcription of DNA into RNA using the four ribonucleoside triphosphates as substrates. This Takakia lepidozioides (Moss) protein is DNA-directed RNA polymerase subunit alpha.